The following is a 469-amino-acid chain: 3-isopropylmalate dehydratase large subunit (469 aa).

The [4Fe-4S] cluster site is built by Cys347, Cys410, and Cys413.

This sequence belongs to the aconitase/IPM isomerase family. LeuC type 1 subfamily. As to quaternary structure, heterodimer of LeuC and LeuD. It depends on [4Fe-4S] cluster as a cofactor.

The catalysed reaction is (2R,3S)-3-isopropylmalate = (2S)-2-isopropylmalate. Its pathway is amino-acid biosynthesis; L-leucine biosynthesis; L-leucine from 3-methyl-2-oxobutanoate: step 2/4. Functionally, catalyzes the isomerization between 2-isopropylmalate and 3-isopropylmalate, via the formation of 2-isopropylmaleate. In Burkholderia mallei (strain NCTC 10247), this protein is 3-isopropylmalate dehydratase large subunit.